We begin with the raw amino-acid sequence, 340 residues long: Phosphoribosylformylglycinamidine cyclo-ligase (340 aa).

Belongs to the AIR synthase family.

It is found in the cytoplasm. It catalyses the reaction 2-formamido-N(1)-(5-O-phospho-beta-D-ribosyl)acetamidine + ATP = 5-amino-1-(5-phospho-beta-D-ribosyl)imidazole + ADP + phosphate + H(+). It functions in the pathway purine metabolism; IMP biosynthesis via de novo pathway; 5-amino-1-(5-phospho-D-ribosyl)imidazole from N(2)-formyl-N(1)-(5-phospho-D-ribosyl)glycinamide: step 2/2. This Streptococcus pyogenes serotype M28 (strain MGAS6180) protein is Phosphoribosylformylglycinamidine cyclo-ligase.